The chain runs to 261 residues: Secreted RxLR effector protein 154 (261 aa).

A signal peptide spans 1-18 (MRRCALLFRLFLISYSCS). The RxLR-dEER signature appears at 49–64 (RILQADDPEHIRTEER).

This sequence belongs to the RxLR effector family.

Its subcellular location is the secreted. It is found in the host cell membrane. Secreted effector that completely suppresses the host cell death induced by cell death-inducing proteins. This chain is Secreted RxLR effector protein 154, found in Plasmopara viticola (Downy mildew of grapevine).